Here is a 528-residue protein sequence, read N- to C-terminus: MGSKTKGCCGWLIVALVASLVATAAVVAIMKKKVGGGSGRKLKPLPVPGPPGAIDSKYGDALGVALQFFQVQKAGKLENNQIPWRGDSALDDGKPAGLDLSKGMYDAGDHIKFSFPMAFTATVLSWSILEYGDQMSATKQLDPALDALRWITDFLVNAHPSDNVFYIQVGDPDLDHNCWERPETMSEKRPLTQINTKSPGSDVAAEAAAAMASASIVFKSRDTTYSDSLLQHAQKLFTFADTYKGLASDTYPKLQNYYNSTGYQDELLWAASWLYHATGDQTYLSYVTVENGKAFADWGRPTWFSWDDKLAGTQVLLSRLNFFGSKQTSNAENMGLKMYRDTAEAVICGLLPDSPSATASRTGGGLVWISGWNSLQHATNAAFLAVVYSDYMLTSQTAAVQCSGKYYSPTDIRNFAISQANYILGDNPMKLSYLVGYGSSYPQQVHHRGASIPADAKTGCKGFQYLHSTSPNPNVAMGALVGGPFQNDTFVDSRDNAVQTESSTYNSGTLVGLLSGLVTTSSVAQSFT.

The signal sequence occupies residues 1-24 (MGSKTKGCCGWLIVALVASLVATA). Asp-109 serves as the catalytic Nucleophile. A glycan (N-linked (GlcNAc...) asparagine) is linked at Asn-259. The active site involves His-446. Asn-487 carries N-linked (GlcNAc...) asparagine glycosylation. Active-site residues include Asp-492 and Glu-501.

This sequence belongs to the glycosyl hydrolase 9 (cellulase E) family.

Its subcellular location is the secreted. The catalysed reaction is Endohydrolysis of (1-&gt;4)-beta-D-glucosidic linkages in cellulose, lichenin and cereal beta-D-glucans.. The polypeptide is Endoglucanase 24 (Oryza sativa subsp. japonica (Rice)).